Consider the following 191-residue polypeptide: Superoxide dismutase [Mn/Fe] (191 aa).

Histidine 27, histidine 74, aspartate 157, and histidine 161 together coordinate Fe(3+). Mn(2+) is bound by residues histidine 27, histidine 74, aspartate 157, and histidine 161.

The protein belongs to the iron/manganese superoxide dismutase family. In terms of assembly, homodimer. It depends on Mn(2+) as a cofactor. Fe(3+) is required as a cofactor.

The enzyme catalyses 2 superoxide + 2 H(+) = H2O2 + O2. Inhibited by hydrogen peroxide. Destroys superoxide anion radicals which are normally produced within the cells and which are toxic to biological systems. Catalyzes the dismutation of superoxide anion radicals into O2 and H2O2 by successive reduction and oxidation of the transition metal ion at the active site. The polypeptide is Superoxide dismutase [Mn/Fe] (sodB) (Porphyromonas gingivalis (strain ATCC BAA-308 / W83)).